A 404-amino-acid polypeptide reads, in one-letter code: Ubiquitin-like modifier-activating enzyme 5 (404 aa).

5 residues coordinate ATP: Gly-83, Asp-104, Lys-127, Asn-150, and Asn-184. 2 residues coordinate Zn(2+): Cys-226 and Cys-229. The active-site Glycyl thioester intermediate is the Cys-250. Residues Cys-303 and Cys-308 each coordinate Zn(2+). A disordered region spans residues 372–404 (APEKSSETSEETVSAATADETSLEDLMAQMKSM). Low complexity predominate over residues 382–391 (ETVSAATADE).

It belongs to the ubiquitin-activating E1 family. UBA5 subfamily. Interacts (via C-terminus) with Ufc1. Interacts with Ufm1.

The protein resides in the cytoplasm. The protein localises to the nucleus. Its subcellular location is the golgi apparatus. E1-like enzyme which activates UFM1. The protein is Ubiquitin-like modifier-activating enzyme 5 of Drosophila melanogaster (Fruit fly).